A 281-amino-acid polypeptide reads, in one-letter code: Phytanoyl-CoA dioxygenase 1 (281 aa).

2-oxoglutarate-binding positions include Lys-98, Met-137, 152–154 (HQD), and Trp-169. The Fe cation site is built by His-152 and Asp-154. His-237 contributes to the Fe cation binding site. Ser-239 and Arg-248 together coordinate 2-oxoglutarate.

This sequence belongs to the PhyH family. Requires Fe cation as cofactor. The cofactor is L-ascorbate.

The catalysed reaction is phytanoyl-CoA + 2-oxoglutarate + O2 = 2-hydroxyphytanoyl-CoA + succinate + CO2. It functions in the pathway lipid metabolism; fatty acid metabolism. Its function is as follows. Converts phytanoyl-CoA to 2-hydroxyphytanoyl-CoA. The sequence is that of Phytanoyl-CoA dioxygenase 1 from Oryza sativa subsp. japonica (Rice).